The primary structure comprises 498 residues: Succinate-semialdehyde dehydrogenase [NADP(+)] 1 (498 aa).

247–252 (GSTNVG) lines the NAD(+) pocket. Active-site residues include Glu269 and Cys303.

Belongs to the aldehyde dehydrogenase family. In terms of assembly, homotetramer.

Its subcellular location is the cytoplasm. The enzyme catalyses succinate semialdehyde + NAD(+) + H2O = succinate + NADH + 2 H(+). It catalyses the reaction succinate semialdehyde + NADP(+) + H2O = succinate + NADPH + 2 H(+). It functions in the pathway amino-acid degradation; 4-aminobutanoate degradation. In terms of biological role, catalyzes the oxidation of succinate semialdehyde to succinate. Can utilize both NAD(+) or NADP(+) as a coenzyme. Functions in a gamma-aminobutyrate (GABA) degradation pathway that allows growth utilizing GABA as a nitrogen source. Functions in the GABA shunt, which allows to bypass 2 reactions in the TCA cycle by removing alpha-ketoglutarate from the cycle and feeding succinate and NADH back into the cycle. This is Succinate-semialdehyde dehydrogenase [NADP(+)] 1 (ssd1) from Schizosaccharomyces pombe (strain 972 / ATCC 24843) (Fission yeast).